A 635-amino-acid polypeptide reads, in one-letter code: Ankyrin repeat and SOCS box protein 2 (635 aa).

Residues 8-16 (RGSQCTIGQ) are required for FLNA degradation. The 20-residue stretch at 26-45 (SEDELVQMAIEQSLADKTRG) folds into the UIM domain. ANK repeat units lie at residues 104 to 133 (APAD…NLAE), 137 to 167 (EGWL…TIDQ), 171 to 200 (QEET…EPDI), 204 to 233 (SRET…DTNH), 237 to 266 (RGWT…KVES), 270 to 299 (YGIT…DINT), 303 to 332 (DNAS…DANK), 336 to 365 (DGLL…RTRI), 368 to 397 (SGVS…DVNT), 410 to 439 (RRSS…DPNR), 440 to 469 (DVIS…NIDA), and 476 to 504 (TAFP…DGEP). Residue Ser371 is modified to Phosphoserine; by MAPK. The 50-residue stretch at 586 to 635 (IKEKAEPPRPLAHLCRLRVRKAIGKYRIKLLDTLPLPGRLIRYLKYENTQ) folds into the SOCS box domain.

It belongs to the ankyrin SOCS box (ASB) family. In terms of assembly, component of a probable ECS E3 ubiquitin-protein ligase complex which contains CUL5, either RBX1 or RNF7/RBX2, Elongin BC complex (ELOB and ELOC) and ASB2. Interacts with SKP2. Through its interaction with SKP2, likely to bridge the formation of dimeric E3-ubiquitin-protein ligase complexes composed of an ECS complex and an SCF(SKP2) complex. Interacts with JAK2; the interaction targets JAK2 for Notch-mediated proteasomal degradation. Interacts with TCF3/E2A; the interaction is mediated by SKP2 and targets TCF3 for Notch-mediated proteasomal degradation. As to quaternary structure, interacts with DES. Post-translationally, monoubiquitinated. In terms of processing, not monoubiquitinated. Phosphorylation at Ser-371 is required for association with FLNA and subsequent FLNA degradation. As to expression, expressed in muscle cells. In terms of tissue distribution, expressed in hematopoietic cells.

It localises to the cytoplasm. The protein localises to the cytoskeleton. The protein resides in the stress fiber. It is found in the myofibril. Its subcellular location is the sarcomere. It localises to the z line. Its pathway is protein modification; protein ubiquitination. Its function is as follows. Substrate-recognition component of a SCF-like ECS (Elongin-Cullin-SOCS-box protein) E3 ubiquitin-protein ligase complex which mediates the ubiquitination and subsequent proteasomal degradation of target proteins. Mediates Notch-induced ubiquitination and degradation of substrates including TCF3/E2A and JAK2. Required during embryonic heart development for complete heart looping. Required for cardiomyocyte differentiation. Specifically promotes the ubiquitination of SMAD9 and targets it for proteasomal degradation, leading to avoid excessive accumulation of SMAD9. Plays a role in the regulation of NK-cell migration by modulating protein levels of filamin A/FLNA via regulation of its ubiquitination and proteasome degradation. Involved in myogenic differentiation and targets filamin FLNB for proteasomal degradation but not filamin FLNA. Also targets DES for proteasomal degradation. Acts as a negative regulator of skeletal muscle mass. In terms of biological role, targets filamins FLNA and FLNB for proteasomal degradation. This leads to enhanced adhesion of hematopoietic cells to fibronectin. Required for FLNA degradation in immature cardiomyocytes which is necessary for actin cytoskeleton remodeling, leading to proper organization of myofibrils and function of mature cardiomyocytes. Required for degradation of FLNA and FLNB in immature dendritic cells (DC) which enhances immature DC migration by promoting DC podosome formation and DC-mediated degradation of the extracellular matrix. Does not promote proteasomal degradation of tyrosine-protein kinases JAK1 or JAK2 in hematopoietic cells. In Homo sapiens (Human), this protein is Ankyrin repeat and SOCS box protein 2 (ASB2).